The sequence spans 343 residues: 4-hydroxy-2-oxovalerate aldolase (343 aa).

The Pyruvate carboxyltransferase domain maps to 4–254; it reads PRLTDTTLRD…NPGLDVFGLM (251 aa). Substrate is bound at residue 12–13; the sequence is RD. Aspartate 13 lines the Mn(2+) pocket. Histidine 16 serves as the catalytic Proton acceptor. Substrate-binding residues include serine 166 and histidine 193. Mn(2+) contacts are provided by histidine 193 and histidine 195. Tyrosine 284 provides a ligand contact to substrate.

The protein belongs to the 4-hydroxy-2-oxovalerate aldolase family.

It catalyses the reaction (S)-4-hydroxy-2-oxopentanoate = acetaldehyde + pyruvate. The chain is 4-hydroxy-2-oxovalerate aldolase from Chloroflexus aggregans (strain MD-66 / DSM 9485).